The sequence spans 59 residues: Large ribosomal subunit protein bL32c (59 aa).

Residues 1 to 20 (MAVPKKRTSKSKKRIRKSVW) form a disordered region.

It belongs to the bacterial ribosomal protein bL32 family.

It localises to the plastid. The protein resides in the chloroplast. The chain is Large ribosomal subunit protein bL32c from Angiopteris evecta (Mule's foot fern).